The sequence spans 134 residues: Cytochrome b5 (134 aa).

Residues 6-82 form the Cytochrome b5 heme-binding domain; that stretch reads VKYFTRAEVA…MKQYKVGELV (77 aa). Residues H41 and H65 each contribute to the heme site. Residues 111-131 form a helical membrane-spanning segment; sequence WLMPFVLGLVATLIYKFFFGT.

The protein belongs to the cytochrome b5 family.

It is found in the endoplasmic reticulum membrane. The protein localises to the microsome membrane. Functionally, cytochrome b5 is a membrane bound hemoprotein which function as an electron carrier for several membrane bound oxygenases. The polypeptide is Cytochrome b5 (Cyt-b5) (Musca domestica (House fly)).